The primary structure comprises 419 residues: L-rhamnose isomerase (419 aa).

The Mn(2+) site is built by histidine 262, aspartate 294, and aspartate 296.

It belongs to the rhamnose isomerase family. Homotetramer. It depends on Mn(2+) as a cofactor.

Its subcellular location is the cytoplasm. It carries out the reaction L-rhamnopyranose = L-rhamnulose. Its pathway is carbohydrate degradation; L-rhamnose degradation; glycerone phosphate from L-rhamnose: step 1/3. In terms of biological role, catalyzes the interconversion of L-rhamnose and L-rhamnulose. The polypeptide is L-rhamnose isomerase (Shigella boydii serotype 4 (strain Sb227)).